Consider the following 917-residue polypeptide: Envelope glycoprotein B (917 aa).

The first 22 residues, 1 to 22, serve as a signal peptide directing secretion; sequence MAISRRSLHAIILTVLLLAATA. Residues 21–30 are compositionally biased toward low complexity; sequence TAAPSQSGSR. The interval 21-117 is disordered; sequence TAAPSQSGSR…SGNASEPADP (97 aa). Over 23-792 the chain is Virion surface; sequence APSQSGSRSR…SGVSSFLSNP (770 aa). Positions 38–49 are enriched in basic and acidic residues; that stretch reads ERQSTNRGRDNN. Asn-48, Asn-110, and Asn-164 each carry an N-linked (GlcNAc...) asparagine; by host glycan. 5 disulfides stabilise this stretch: Cys-139-Cys-591, Cys-156-Cys-547, Cys-230-Cys-294, Cys-387-Cys-435, and Cys-614-Cys-651. 2 involved in fusion and/or binding to host membrane regions span residues 196-202 and 281-288; these read VWSGYSY and GSAWIHRH. N-linked (GlcNAc...) asparagine; by host glycosylation is found at Asn-421, Asn-453, and Asn-505. Asn-692 carries N-linked (GlcNAc...) asparagine; by host glycosylation. The hydrophobic membrane proximal region stretch occupies residues 737-790; the sequence is IDTVIKADPNAAIFAGLHGFFEGLGDVGRAVGRVVLGVVGGVVATVSGVSSFLS. A helical membrane pass occupies residues 793–813; sequence FGALAIGLLVLGGLVAAFFAF. Over 814–917 the chain is Intravirion; the sequence is RYVMRLQRNP…EALPETDEDI (104 aa). A Golgi targeting motif is present at residues 865–868; sequence YMAL. Positions 907-910 match the Internalization motif motif; that stretch reads YEAL.

It belongs to the herpesviridae glycoprotein B family. As to quaternary structure, homotrimer; disulfide-linked. Binds to heparan sulfate proteoglycans. Interacts with gH/gL heterodimer. Post-translationally, a proteolytic cleavage by host furin generates two subunits that remain linked by disulfide bonds.

The protein resides in the virion membrane. The protein localises to the host cell membrane. Its subcellular location is the host endosome membrane. It is found in the host Golgi apparatus membrane. Functionally, envelope glycoprotein that forms spikes at the surface of virion envelope. Essential for the initial attachment to heparan sulfate moieties of the host cell surface proteoglycans. Involved in fusion of viral and cellular membranes leading to virus entry into the host cell. Following initial binding to its host receptors, membrane fusion is mediated by the fusion machinery composed at least of gB and the heterodimer gH/gL. May be involved in the fusion between the virion envelope and the outer nuclear membrane during virion egress. The chain is Envelope glycoprotein B from Bovine herpesvirus 2 (strain BMV) (BoHV-2).